Here is a 98-residue protein sequence, read N- to C-terminus: Keratinocyte differentiation-associated protein (98 aa).

Positions 1-22 are cleaved as a signal peptide; that stretch reads MKIPILPIVALLSLLALHAAQG.

Ubiquitously expressed in stratified epithelium.

It localises to the secreted. May act as a soluble regulator of keratinocyte differentiation. May play an important role in embryonic skin morphogenesis. The sequence is that of Keratinocyte differentiation-associated protein from Rattus norvegicus (Rat).